A 275-amino-acid polypeptide reads, in one-letter code: Phosphonoacetaldehyde hydrolase (275 aa).

The active-site Nucleophile is the Asp15. Mg(2+) contacts are provided by Asp15 and Ala17. The Schiff-base intermediate with substrate role is filled by Lys56. Residue Asp189 participates in Mg(2+) binding.

This sequence belongs to the HAD-like hydrolase superfamily. PhnX family. As to quaternary structure, homodimer. The cofactor is Mg(2+).

The catalysed reaction is phosphonoacetaldehyde + H2O = acetaldehyde + phosphate + H(+). Involved in phosphonate degradation. The sequence is that of Phosphonoacetaldehyde hydrolase from Pseudomonas fluorescens (strain SBW25).